The sequence spans 130 residues: Large ribosomal subunit protein bL19 (130 aa).

Belongs to the bacterial ribosomal protein bL19 family.

Functionally, this protein is located at the 30S-50S ribosomal subunit interface and may play a role in the structure and function of the aminoacyl-tRNA binding site. This chain is Large ribosomal subunit protein bL19, found in Burkholderia ambifaria (strain ATCC BAA-244 / DSM 16087 / CCUG 44356 / LMG 19182 / AMMD) (Burkholderia cepacia (strain AMMD)).